The following is an 88-amino-acid chain: Small ribosomal subunit protein bS16 (88 aa).

The protein belongs to the bacterial ribosomal protein bS16 family.

The chain is Small ribosomal subunit protein bS16 from Symbiobacterium thermophilum (strain DSM 24528 / JCM 14929 / IAM 14863 / T).